Reading from the N-terminus, the 205-residue chain is High frequency lysogenization protein HflD homolog (205 aa).

Belongs to the HflD family.

The protein resides in the cytoplasm. It localises to the cell inner membrane. The protein is High frequency lysogenization protein HflD homolog of Haemophilus influenzae (strain PittEE).